Consider the following 124-residue polypeptide: Small ribosomal subunit protein uS12 (124 aa).

The segment at 1–29 (MATINQLVRKGRKRRVAKSNVPALEASPQ) is disordered. Residue D89 is modified to 3-methylthioaspartic acid. Residues 101–124 (AADTAGVDKRRQGRSKYGAKRPKS) are disordered. Basic residues predominate over residues 111–124 (RQGRSKYGAKRPKS).

This sequence belongs to the universal ribosomal protein uS12 family. As to quaternary structure, part of the 30S ribosomal subunit. Contacts proteins S8 and S17. May interact with IF1 in the 30S initiation complex.

With S4 and S5 plays an important role in translational accuracy. Functionally, interacts with and stabilizes bases of the 16S rRNA that are involved in tRNA selection in the A site and with the mRNA backbone. Located at the interface of the 30S and 50S subunits, it traverses the body of the 30S subunit contacting proteins on the other side and probably holding the rRNA structure together. The combined cluster of proteins S8, S12 and S17 appears to hold together the shoulder and platform of the 30S subunit. The sequence is that of Small ribosomal subunit protein uS12 from Alkalilimnicola ehrlichii (strain ATCC BAA-1101 / DSM 17681 / MLHE-1).